Reading from the N-terminus, the 158-residue chain is MKEIVLAGGCFWGVEAYMERIDGVVETKVGYANGHVENPSYEEVCSSQTGHAEVCYIKFDETKISLEILLNGFWKIIDPTVENRQGPDIGSQYRTGIYYGHEEDLDTIIKSKEMQQKKYDANIVTEIEPLKAFYDAEEYHQKYLKKNPGGYCHINLEI.

The active site involves C10.

It belongs to the MsrA Met sulfoxide reductase family.

The catalysed reaction is L-methionyl-[protein] + [thioredoxin]-disulfide + H2O = L-methionyl-(S)-S-oxide-[protein] + [thioredoxin]-dithiol. It catalyses the reaction [thioredoxin]-disulfide + L-methionine + H2O = L-methionine (S)-S-oxide + [thioredoxin]-dithiol. Its function is as follows. Has an important function as a repair enzyme for proteins that have been inactivated by oxidation. Catalyzes the reversible oxidation-reduction of methionine sulfoxide in proteins to methionine. In Alkaliphilus metalliredigens (strain QYMF), this protein is Peptide methionine sulfoxide reductase MsrA.